Here is a 746-residue protein sequence, read N- to C-terminus: Alpha-galactosidase 2 (746 aa).

The first 26 residues, 1–26, serve as a signal peptide directing secretion; it reads MLGAPSPRRLADVLAVTAGLVASVRA. N-linked (GlcNAc...) asparagine glycans are attached at residues asparagine 43, asparagine 156, asparagine 180, asparagine 188, asparagine 360, asparagine 427, asparagine 446, and asparagine 495. The active-site Nucleophile is aspartate 504. Aspartate 566 serves as the catalytic Proton donor. Residue asparagine 714 is glycosylated (N-linked (GlcNAc...) asparagine).

The protein belongs to the glycosyl hydrolase 27 family.

The protein resides in the secreted. The catalysed reaction is Hydrolysis of terminal, non-reducing alpha-D-galactose residues in alpha-D-galactosides, including galactose oligosaccharides, galactomannans and galactolipids.. Its function is as follows. Alpha-galactosidase involved in the degradation of simple oligosaccharides like melibiose, raffinose and stachyose, and of polymeric galacto(gluco)mannans. The chain is Alpha-galactosidase 2 (agl2) from Hypocrea jecorina (Trichoderma reesei).